Here is a 249-residue protein sequence, read N- to C-terminus: MLLFSSLPVLLLCVVTASYSEIKTCEDAQKTCSVITCGIPVTNGTPGRDGRDGPKGEKGEPGPGFRGSQGPPGKMGPPGNIGETGPLGPKGQKGDPGDTSGVEAKLANLEGQIRILKSELDHVKKLQTFSLGKKSRKKLYVTNGEMMPFSKVKTLCAELQATVATPKNAEENKAIQDMAPDVAFLGITDEVTEGQFMYVTGGRMTYSNWKSNEPNDHGSGEDCVILQRDGLWNDISCSSSFLAVCEFPA.

The signal sequence occupies residues Met1–Ser20. The interval Val41–Val102 is disordered. Basic and acidic residues predominate over residues Arg48–Glu60. Position 54 is a 4-hydroxyproline (Pro54). 2 positions are modified to 5-hydroxylysine: Lys55 and Lys58. O-linked (Gal...) hydroxylysine glycans are attached at residues Lys55 and Lys58. Pro61, Pro72, Pro78, and Pro89 each carry 4-hydroxyproline. The region spanning Gly64–Asp98 is the Collagen-like domain. A 5-hydroxylysine mark is found at Lys90 and Lys93. 2 O-linked (Gal...) hydroxylysine glycosylation sites follow: Lys90 and Lys93. One can recognise a C-type lectin domain in the interval Ser135–Glu246. 2 cysteine pairs are disulfide-bonded: Cys156–Cys245 and Cys223–Cys237. Ca(2+) is bound by residues Asp189, Glu193, Glu213, Asn215, Asp216, Glu221, Asp222, Asn233, and Asp234. Positions Glu213 to Glu221 are calcium-dependent carbohydrate binding.

As to quaternary structure, interacts with MASP1 and MASP2. Forms oligomeric complexes of 3, 4, 5 or, predominantly, 6 homotrimers. The homotrimers appear as globular heads that are connected to a central hub by thin stalks. In terms of processing, hydroxylated on lysine and proline residues within the collagen-like domain. Post-translationally, O-glycosylated. O-linked glycans on hydroxylysine residues consist of Glc-Gal disaccharides bound to the oxygen atom of post-translationally added hydroxyl groups. As to expression, detected in blood serum (at protein level). Expressed in liver. Weakly expressed in lung, testis and brain. Not detected in bone marrow and heart.

Its subcellular location is the secreted. Functionally, calcium-dependent lectin. Plays a role in the innate immune response by binding mannose, fucose and N-acetylglucosamine on bacteria, including strains of A.suis, H.parasuis and A.pleuropneumoniae, and activates the lectin complement pathway. According to some authors, it only binds mannose. The polypeptide is Mannose-binding protein A (Sus scrofa (Pig)).